Consider the following 110-residue polypeptide: DNA-binding protein PAE3044 (110 aa).

Belongs to the PDCD5 family.

The sequence is that of DNA-binding protein PAE3044 from Pyrobaculum aerophilum (strain ATCC 51768 / DSM 7523 / JCM 9630 / CIP 104966 / NBRC 100827 / IM2).